Reading from the N-terminus, the 3420-residue chain is Adhesin BmaC autotransporter (3420 aa).

Positions 1–72 (MPNLANQDFT…SLVMAGTAAA (72 aa)) are cleaved as a signal peptide. The region spanning 3138-3420 (GPSGNNGIWA…AGSVGLRVRW (283 aa)) is the Autotransporter domain.

The protein localises to the cell surface. Its subcellular location is the cell outer membrane. Its function is as follows. Fibronectin-binding protein, which is involved in adhesion to host cells and in the infective process. Mediates the binding of B.suis to the extracellular matrix and to non-phagocytic cells via cell-associated fibronectin. The protein is Adhesin BmaC autotransporter of Brucella suis biovar 1 (strain 1330).